The primary structure comprises 206 residues: 2,3-bisphosphoglycerate-dependent phosphoglycerate mutase (206 aa).

Substrate contacts are provided by residues 9–16 (RHGQSEWN), 22–23 (TG), arginine 61, 88–91 (ERDY), lysine 99, 115–116 (RR), and 159–160 (GN). Histidine 10 acts as the Tele-phosphohistidine intermediate in catalysis. Catalysis depends on glutamate 88, which acts as the Proton donor/acceptor.

The protein belongs to the phosphoglycerate mutase family. BPG-dependent PGAM subfamily. In terms of assembly, homodimer.

It carries out the reaction (2R)-2-phosphoglycerate = (2R)-3-phosphoglycerate. Its pathway is carbohydrate degradation; glycolysis; pyruvate from D-glyceraldehyde 3-phosphate: step 3/5. Its function is as follows. Catalyzes the interconversion of 2-phosphoglycerate and 3-phosphoglycerate. This Brucella abortus (strain S19) protein is 2,3-bisphosphoglycerate-dependent phosphoglycerate mutase.